The chain runs to 428 residues: Glutamate-1-semialdehyde 2,1-aminomutase (428 aa).

An N6-(pyridoxal phosphate)lysine modification is found at lysine 267.

Belongs to the class-III pyridoxal-phosphate-dependent aminotransferase family. HemL subfamily. Homodimer. Pyridoxal 5'-phosphate serves as cofactor.

It localises to the cytoplasm. It catalyses the reaction (S)-4-amino-5-oxopentanoate = 5-aminolevulinate. Its pathway is porphyrin-containing compound metabolism; protoporphyrin-IX biosynthesis; 5-aminolevulinate from L-glutamyl-tRNA(Glu): step 2/2. The protein operates within porphyrin-containing compound metabolism; chlorophyll biosynthesis. The protein is Glutamate-1-semialdehyde 2,1-aminomutase of Prochlorococcus marinus (strain NATL1A).